We begin with the raw amino-acid sequence, 215 residues long: tRNA (guanine-N(7)-)-methyltransferase (215 aa).

S-adenosyl-L-methionine contacts are provided by glutamate 43, glutamate 68, aspartate 95, and aspartate 117. Aspartate 117 is an active-site residue. Residues lysine 121, aspartate 153, and 190-193 (TEYE) each bind substrate.

Belongs to the class I-like SAM-binding methyltransferase superfamily. TrmB family.

It carries out the reaction guanosine(46) in tRNA + S-adenosyl-L-methionine = N(7)-methylguanosine(46) in tRNA + S-adenosyl-L-homocysteine. The protein operates within tRNA modification; N(7)-methylguanine-tRNA biosynthesis. In terms of biological role, catalyzes the formation of N(7)-methylguanine at position 46 (m7G46) in tRNA. The chain is tRNA (guanine-N(7)-)-methyltransferase from Staphylococcus epidermidis (strain ATCC 35984 / DSM 28319 / BCRC 17069 / CCUG 31568 / BM 3577 / RP62A).